We begin with the raw amino-acid sequence, 132 residues long: MASSASSVVRATVRAVSKRKIQATRAALTLTPSAVQKIKELLKDKPEHVGVKVGVRTRGCNGLSYTLEYTKSKGDSDEEVVQDGVRVFIEKKAQLTLLGTEMDYVEDKLSSEFVFNNPNIKGTCGCGESFNI.

The transit peptide at 1-15 (MASSASSVVRATVRA) directs the protein to the mitochondrion. The Fe cation site is built by Cys60, Cys124, and Cys126.

This sequence belongs to the HesB/IscA family. As to quaternary structure, homooligomer, forming a rod-shaped structure 24 nm in length that may arise through a double-helical assembly of subunits. Interacts with CRY4; CRY4 seems to be associated with the outside of the rod-shaped homooligomer. Does not interact with CRY1 or CRY2. As to expression, detected in retina, especially in the retinal ganglion layer, the inner nuclear layer and the outer nuclear layer. Detected in retina visual pigment cells (at protein level).

The protein localises to the mitochondrion. Its function is as follows. Involved in the maturation of mitochondrial 4Fe-4S proteins functioning late in the iron-sulfur cluster assembly pathway. Probably involved in the binding of an intermediate of Fe/S cluster assembly. Component of a putative magnetoreceptor complex formed by ISCA1 and CRY4, a member of the cryptochrome family that are known to be required for light-dependent magnetosensitivity in various orgnisms. The rod-like assembly may facilitate the perception of the Earth's weak magnetic field. Both ISCA1 and the complex with CRY4 have magnetic properties and are attracted to iron beads. When exposed to a magnetic field of 1 mT (superior to the natural magnetic field), over 50% of the rod-like complexes align more or less in parallel with the magnetic field at room temperature. The sequence is that of Iron-sulfur cluster assembly 1 homolog, mitochondrial (ISCA1) from Columba livia (Rock dove).